Reading from the N-terminus, the 357-residue chain is UDP-N-acetylglucosamine--N-acetylmuramyl-(pentapeptide) pyrophosphoryl-undecaprenol N-acetylglucosamine transferase (357 aa).

Residues 11-13 (TGG), asparagine 123, arginine 159, serine 187, isoleucine 241, 260-265 (ALTVAE), and glutamine 286 each bind UDP-N-acetyl-alpha-D-glucosamine.

This sequence belongs to the glycosyltransferase 28 family. MurG subfamily.

The protein localises to the cell inner membrane. It carries out the reaction di-trans,octa-cis-undecaprenyl diphospho-N-acetyl-alpha-D-muramoyl-L-alanyl-D-glutamyl-meso-2,6-diaminopimeloyl-D-alanyl-D-alanine + UDP-N-acetyl-alpha-D-glucosamine = di-trans,octa-cis-undecaprenyl diphospho-[N-acetyl-alpha-D-glucosaminyl-(1-&gt;4)]-N-acetyl-alpha-D-muramoyl-L-alanyl-D-glutamyl-meso-2,6-diaminopimeloyl-D-alanyl-D-alanine + UDP + H(+). It functions in the pathway cell wall biogenesis; peptidoglycan biosynthesis. Functionally, cell wall formation. Catalyzes the transfer of a GlcNAc subunit on undecaprenyl-pyrophosphoryl-MurNAc-pentapeptide (lipid intermediate I) to form undecaprenyl-pyrophosphoryl-MurNAc-(pentapeptide)GlcNAc (lipid intermediate II). This chain is UDP-N-acetylglucosamine--N-acetylmuramyl-(pentapeptide) pyrophosphoryl-undecaprenol N-acetylglucosamine transferase, found in Aromatoleum aromaticum (strain DSM 19018 / LMG 30748 / EbN1) (Azoarcus sp. (strain EbN1)).